Consider the following 158-residue polypeptide: Endoribonuclease YbeY (158 aa).

His121, His125, and His131 together coordinate Zn(2+).

The protein belongs to the endoribonuclease YbeY family. It depends on Zn(2+) as a cofactor.

It localises to the cytoplasm. Functionally, single strand-specific metallo-endoribonuclease involved in late-stage 70S ribosome quality control and in maturation of the 3' terminus of the 16S rRNA. The polypeptide is Endoribonuclease YbeY (Exiguobacterium sp. (strain ATCC BAA-1283 / AT1b)).